Reading from the N-terminus, the 63-residue chain is MVQRCLVVALLVVVVAAALCSAQLNFTPNWGTGKRDAADFGDPYSFLYRLIQAEARKMSGCSN.

Residues 1 to 22 (MVQRCLVVALLVVVVAAALCSA) form the signal peptide. Gln-23 carries the post-translational modification Pyrrolidone carboxylic acid. Thr-32 carries the threonine amide modification.

The protein belongs to the AKH/HRTH/RPCH family. As to quaternary structure, adipokinetic hormone precursor-related peptide (APRP) can form three type of disulfide-bond dimers: p1 (alpha-alpha), p2 (alpha-beta), and p3 (beta-beta).

It localises to the secreted. This hormone, released from cells in the corpora cardiaca, causes release of diglycerides from the fat body and stimulation of muscles to use these diglycerides as an energy source during energy-demanding processes. The protein is Adipokinetic prohormone type 1 of Schistocerca gregaria (Desert locust).